Reading from the N-terminus, the 93-residue chain is Parbolysin P4 (93 aa).

Intrachain disulfides connect Cys-16–Cys-37, Cys-22–Cys-33, and Cys-47–Cys-60.

This sequence belongs to the worm cytolysin family. In terms of tissue distribution, localized within the skin and proboscis and are most readily isolated from body mucus secretions.

It localises to the secreted. Its function is as follows. Cytolysin that shows hemolytic activity (on bovine erythrocytes, HC(50)=5.75 mg/ml). This hemolytic activity is completely inhibited by small unilamelar vesicles composed of PC/PG, PC/PI and PC/PS in 1:1 molar ratios (with at least 100 mg/ml concentration). This Parborlasia corrugatus (Antarctic nemertean worm) protein is Parbolysin P4.